A 307-amino-acid chain; its full sequence is GTPase Era (307 aa).

The Era-type G domain occupies R17 to E186. Residues G25–S32 form a G1 region. G25–S32 contacts GTP. Residues Q51–N55 are G2. The tract at residues D72 to G75 is G3. GTP-binding positions include D72 to F76 and N133 to D136. Residues N133–D136 are G4. Residues V165–A167 are G5. The KH type-2 domain occupies L217–S293.

Belongs to the TRAFAC class TrmE-Era-EngA-EngB-Septin-like GTPase superfamily. Era GTPase family. As to quaternary structure, monomer.

It localises to the cytoplasm. The protein localises to the cell inner membrane. In terms of biological role, an essential GTPase that binds both GDP and GTP, with rapid nucleotide exchange. Plays a role in 16S rRNA processing and 30S ribosomal subunit biogenesis and possibly also in cell cycle regulation and energy metabolism. The chain is GTPase Era from Neisseria meningitidis serogroup B (strain ATCC BAA-335 / MC58).